The following is a 249-amino-acid chain: DNA repair protein RecO (249 aa).

This sequence belongs to the RecO family.

Its function is as follows. Involved in DNA repair and RecF pathway recombination. The sequence is that of DNA repair protein RecO from Lactobacillus delbrueckii subsp. bulgaricus (strain ATCC 11842 / DSM 20081 / BCRC 10696 / JCM 1002 / NBRC 13953 / NCIMB 11778 / NCTC 12712 / WDCM 00102 / Lb 14).